We begin with the raw amino-acid sequence, 430 residues long: Phosphomethylpyrimidine synthase (430 aa).

Substrate contacts are provided by residues Asn68, Met96, Tyr125, His164, 186–188 (SRG), 227–230 (DALR), and Glu266. His270 serves as a coordination point for Zn(2+). Tyr293 serves as a coordination point for substrate. His334 provides a ligand contact to Zn(2+). Residues Cys410, Cys413, and Cys417 each contribute to the [4Fe-4S] cluster site.

Belongs to the ThiC family. The cofactor is [4Fe-4S] cluster.

It carries out the reaction 5-amino-1-(5-phospho-beta-D-ribosyl)imidazole + S-adenosyl-L-methionine = 4-amino-2-methyl-5-(phosphooxymethyl)pyrimidine + CO + 5'-deoxyadenosine + formate + L-methionine + 3 H(+). The protein operates within cofactor biosynthesis; thiamine diphosphate biosynthesis. Functionally, catalyzes the synthesis of the hydroxymethylpyrimidine phosphate (HMP-P) moiety of thiamine from aminoimidazole ribotide (AIR) in a radical S-adenosyl-L-methionine (SAM)-dependent reaction. This is Phosphomethylpyrimidine synthase from Pyrobaculum aerophilum (strain ATCC 51768 / DSM 7523 / JCM 9630 / CIP 104966 / NBRC 100827 / IM2).